A 238-amino-acid polypeptide reads, in one-letter code: 3-dehydroquinate dehydratase (238 aa).

3-dehydroquinate contacts are provided by residues E35–R37 and R70. The active-site Proton donor/acceptor is H133. The active-site Schiff-base intermediate with substrate is K160. 2 residues coordinate 3-dehydroquinate: R202 and Q225.

This sequence belongs to the type-I 3-dehydroquinase family. Homodimer.

The catalysed reaction is 3-dehydroquinate = 3-dehydroshikimate + H2O. It functions in the pathway metabolic intermediate biosynthesis; chorismate biosynthesis; chorismate from D-erythrose 4-phosphate and phosphoenolpyruvate: step 3/7. In terms of biological role, involved in the third step of the chorismate pathway, which leads to the biosynthesis of aromatic amino acids. Catalyzes the cis-dehydration of 3-dehydroquinate (DHQ) and introduces the first double bond of the aromatic ring to yield 3-dehydroshikimate. This Staphylococcus aureus (strain MSSA476) protein is 3-dehydroquinate dehydratase.